Consider the following 1321-residue polypeptide: MSDSVILRSVKKFGEENHAFESDGSHNNDKKSRLQDKMKEGDIRVGFFELFRFSSSKDIWLMLMGGVCALLHGMAQPGILIIFGIMTDIFIKYDIERQELEIPGKACVNNTIVWINSSFHQNMTNGTVCGLVDIESEMIKFSGIYAGVGMTVLILGYFQIRLWVITGARQIRRMRKIYFRRIMRMEIGWFDCTSVGELNSRFADDIEKINDAIADQLAHFLQRMSTAMCGLLLGFYRGWKLTLVILAVSPLIGIGAAVIGLSIAKFTELELKAYAKAGSIADEVLSSIRTVAAFGGENKEVERYEKNLVFAQRWGIWKGMVMGFFTGYMWCLIFFCYALAFWYGSTLVLDEEEYTPGTLVQIFLCVILAAMNIGHASSCLEIFSTGCSAATNIFQTIDRQPVIDCMSGDGYKLDRIKGEIEFHNVTFHYPSRPDVKILDNLSMVIKPGETTALVGSSGAGKSTALQLIQRFYDPCEGMVTLDGHDIRSLNIRWLRDQIGIVEQEPVLFSTTIAENIRFGREDATMEDIVQAAKDANAYNFIMALPQQFDTLVGEGGGQMSGGQKQRVAIARALIRNPKILLLDMATSALDNESEARVQEALNKIQHGHTIISVAHRLSTVRAADVIIGFEHGVAVERGTHEELLERKGVYFMLVTLQSQGDNAHKETSIMGKDATEGGTLERTFSRGSYRDSLRASIRQRSKSQLSLLTHDPPLAVADHKSSYKDSKDNDVLVEEVEPAPVRRILKYNIPEWHYILVGSLSAAINGAVTPIYSLLFSQLLGTFSLLDKEQQRSEIHSMCLFFVILGCVSIFTQFLQGYTFAKSGELLTKRLRKFGFKAMLGQDIGWFDDLRNNPGVLTTRLATDASQVQGATGSQVGMMVNSFTNIIAALLIAFFFSWKLSLIITIFFPFLALSGAVQTKMLTGFASQDKQALEKAGQITSEALSNIRTVAGIGVEGRFIKAFEVELQTSYKTAVRKANIYGLCFAFSQGIAFLANSAAYRYGGYLIAYEGLGFSHVFRVVSSVALSATAVGRTFSYTPSYAKAKISAARFFQLLDRKPPINVYSEAGEKWDNFQGKIDFIDCKFTYPSRPDIQVLNGLSVSVNPGQTLAFVGSSGCGKSTSIQLLERFYDPDQGTVMIDGHDSKKVNIQFLRSNIGIVSQEPVLFDCSIMDNIKYGDNTKEISVERAIAAAKQAQLHDFVMSLPEKYETNVGIQGSQLSRGEKQRIAIARAIVRDPKILLLDEATSALDTESEKTVQTALDKAREGRTCIVIAHRLSTIQNSDIIAVVSQGVVIEKGTHEKLMAQKGAYYKLVITGAPIS.

At 1–62 (MSDSVILRSV…FSSSKDIWLM (62 aa)) the chain is on the cytoplasmic side. Residues 62–385 (MLMGGVCALL…ASSCLEIFST (324 aa)) form the ABC transmembrane type-1 1 domain. A helical transmembrane segment spans residues 63–83 (LMGGVCALLHGMAQPGILIIF). The Extracellular segment spans residues 84-147 (GIMTDIFIKY…MIKFSGIYAG (64 aa)). Residues asparagine 109, asparagine 116, asparagine 122, and asparagine 125 are each glycosylated (N-linked (GlcNAc...) asparagine). The chain crosses the membrane as a helical span at residues 148–168 (VGMTVLILGYFQIRLWVITGA). Over 169 to 215 (RQIRRMRKIYFRRIMRMEIGWFDCTSVGELNSRFADDIEKINDAIAD) the chain is Cytoplasmic. A helical membrane pass occupies residues 216–236 (QLAHFLQRMSTAMCGLLLGFY). Over 237–240 (RGWK) the chain is Extracellular. A helical transmembrane segment spans residues 241–261 (LTLVILAVSPLIGIGAAVIGL). Topologically, residues 262-319 (SIAKFTELELKAYAKAGSIADEVLSSIRTVAAFGGENKEVERYEKNLVFAQRWGIWKG) are cytoplasmic. A helical membrane pass occupies residues 320–340 (MVMGFFTGYMWCLIFFCYALA). Residues 341–353 (FWYGSTLVLDEEE) lie on the Extracellular side of the membrane. Residues 354 to 374 (YTPGTLVQIFLCVILAAMNIG) form a helical membrane-spanning segment. Over 375-755 (HASSCLEIFS…KYNIPEWHYI (381 aa)) the chain is Cytoplasmic. In terms of domain architecture, ABC transporter 1 spans 420–656 (IEFHNVTFHY…KGVYFMLVTL (237 aa)). An ATP-binding site is contributed by 455–462 (GSSGAGKS). At threonine 586 the chain carries Phosphothreonine. Phosphoserine is present on serine 587. Residues 651-674 (FMLVTLQSQGDNAHKETSIMGKDA) are interaction with HAX1. 3 positions are modified to phosphoserine: serine 692, serine 703, and serine 706. One can recognise an ABC transmembrane type-1 2 domain in the interval 755 to 1043 (ILVGSLSAAI…TFSYTPSYAK (289 aa)). Residues 756–776 (LVGSLSAAINGAVTPIYSLLF) traverse the membrane as a helical segment. Topologically, residues 777–794 (SQLLGTFSLLDKEQQRSE) are extracellular. A helical transmembrane segment spans residues 795 to 815 (IHSMCLFFVILGCVSIFTQFL). At 816-869 (QGYTFAKSGELLTKRLRKFGFKAMLGQDIGWFDDLRNNPGVLTTRLATDASQVQ) the chain is on the cytoplasmic side. Helical transmembrane passes span 870-890 (GATG…IAAL) and 891-911 (LIAF…FPFL). At 912–979 (ALSGAVQTKM…SYKTAVRKAN (68 aa)) the chain is on the cytoplasmic side. Residues 980–1000 (IYGLCFAFSQGIAFLANSAAY) traverse the membrane as a helical segment. Residues 1001 to 1011 (RYGGYLIAYEG) are Extracellular-facing. The helical transmembrane segment at 1012–1032 (LGFSHVFRVVSSVALSATAVG) threads the bilayer. At 1033–1321 (RTFSYTPSYA…KLVITGAPIS (289 aa)) the chain is on the cytoplasmic side. Residues 1078-1316 (IDFIDCKFTY…KGAYYKLVIT (239 aa)) enclose the ABC transporter 2 domain. 1113–1120 (GSSGCGKS) is an ATP binding site. Position 1321 is a phosphoserine (serine 1321).

This sequence belongs to the ABC transporter superfamily. ABCB family. Multidrug resistance exporter (TC 3.A.1.201) subfamily. As to quaternary structure, interacts with HAX1. Interacts with the adapter protein complex 2 (AP-2) throught AP2A2 or AP2A1; this interaction regulates cell membrane expression of ABCB11 through its internalization in a clathrin-dependent manner and its subsequent degradation. Ubiquitinated; short-chain ubiquitination regulates cell-Surface expression of ABCB11. Post-translationally, N-glycosylated. As to expression, expressed predominantly, if not exclusively in the liver, where it was further localized to the canalicular microvilli and to subcanalicular vesicles of the hepatocytes by in situ.

The protein localises to the apical cell membrane. It is found in the recycling endosome membrane. The protein resides in the endosome. Its subcellular location is the cell membrane. The enzyme catalyses cholate(in) + ATP + H2O = cholate(out) + ADP + phosphate + H(+). The catalysed reaction is taurocholate(in) + ATP + H2O = taurocholate(out) + ADP + phosphate + H(+). It catalyses the reaction glycocholate(in) + ATP + H2O = glycocholate(out) + ADP + phosphate + H(+). It carries out the reaction glycochenodeoxycholate(in) + ATP + H2O = glycochenodeoxycholate(out) + ADP + phosphate + H(+). The enzyme catalyses taurochenodeoxycholate(in) + ATP + H2O = taurochenodeoxycholate(out) + ADP + phosphate + H(+). The catalysed reaction is glycoursodeoxycholate(in) + ATP + H2O = glycoursodeoxycholate(out) + ADP + phosphate + H(+). It catalyses the reaction tauroursodeoxycholate(in) + ATP + H2O = tauroursodeoxycholate(out) + ADP + phosphate + H(+). It carries out the reaction taurodeoxycholate(in) + ATP + H2O = taurodeoxycholate(out) + ADP + phosphate + H(+). The enzyme catalyses pravastatin(in) + ATP + H2O = pravastatin(out) + ADP + phosphate + H(+). Its activity is regulated as follows. The uptake of taurocholate is inhibited by taurolithocholate sulfate with an IC(50) of 52.9 uM. Pravastatin competitively inhibits the transport of taurocholic acid. Cyclosporin A, glibenclamide, rifampicin and troglitazonestrongly competitively inhibit the transport activity of taurocholate. The canalicular transport activity of taurocholate is strongly dependent on canalicular membrane cholesterol content. The uptake of taurocholate is increased by short- and medium-chain fatty acids. Cholesterol increases transport capacity of taurocholate without affecting the affinity for the substrate. Functionally, catalyzes the transport of the major hydrophobic bile salts, such as taurine and glycine-conjugated cholic acid across the canalicular membrane of hepatocytes in an ATP-dependent manner, therefore participates in hepatic bile acid homeostasis and consequently to lipid homeostasis through regulation of biliary lipid secretion in a bile salts dependent manner. Transports taurine-conjugated bile salts more rapidly than glycine-conjugated bile salts. Also transports non-bile acid compounds, such as pravastatin and fexofenadine in an ATP-dependent manner and may be involved in their biliary excretion. The sequence is that of Bile salt export pump from Rattus norvegicus (Rat).